We begin with the raw amino-acid sequence, 526 residues long: Cytochrome P450 monooxygenase 253 (526 aa).

A run of 3 helical transmembrane segments spans residues 13–33 (IASS…LLLI), 115–135 (FIMA…GYGK), and 306–326 (IGAG…AMTL). A heme-binding site is contributed by cysteine 451.

Belongs to the cytochrome P450 family. Requires heme as cofactor.

The protein resides in the membrane. It participates in secondary metabolite biosynthesis. In terms of biological role, cytochrome P450 monooxygenase that is able to use delta(6)-protoilludene as a substrate to produce delta(6)-protoilludene-8-ol. The polypeptide is Cytochrome P450 monooxygenase 253 (Postia placenta (strain ATCC 44394 / Madison 698-R) (Brown rot fungus)).